Reading from the N-terminus, the 37-residue chain is Cytochrome b6-f complex subunit 5 (37 aa).

The chain crosses the membrane as a helical span at residues 5–25 (LLFGIVLGLIPVTLVGLFVAA).

Belongs to the PetG family. The 4 large subunits of the cytochrome b6-f complex are cytochrome b6, subunit IV (17 kDa polypeptide, PetD), cytochrome f and the Rieske protein, while the 4 small subunits are PetG, PetL, PetM and PetN. The complex functions as a dimer.

The protein resides in the plastid. The protein localises to the chloroplast thylakoid membrane. Component of the cytochrome b6-f complex, which mediates electron transfer between photosystem II (PSII) and photosystem I (PSI), cyclic electron flow around PSI, and state transitions. PetG is required for either the stability or assembly of the cytochrome b6-f complex. The polypeptide is Cytochrome b6-f complex subunit 5 (Rhodomonas salina (Cryptomonas salina)).